Here is a 1972-residue protein sequence, read N- to C-terminus: Myosin-11 (1972 aa).

Residues Ser8, Ser23, and Ser40 each carry the phosphoserine modification. Positions 31-81 (VAKKLVWVPSEKQGFEAASIKEEKGDEVVVELVENGKKVTVGKDDIQKMNP) constitute a Myosin N-terminal SH3-like domain. A Myosin motor domain is found at 85-783 (SKVEDMAELT…VLAHLEEERD (699 aa)). N6,N6,N6-trimethyllysine is present on Lys129. ATP is bound at residue 178 to 185 (GESGAGKT). 2 actin-binding regions span residues 661-683 (LGKLMATLRNTTANFVRCIIPNH) and 762-776 (RIGQSKIFFRTGVLA). The IQ domain occupies 786–815 (ITDVIMAFQAMCRGYLARKAFTKRQQQLTA). Residues 844–1934 (LLQVTRQEEE…KSKLRRGNEA (1091 aa)) adopt a coiled-coil conformation. Phosphothreonine is present on Thr1177. Phosphoserine is present on residues Ser1684 and Ser1722. The segment covering 1771 to 1788 (NELATERSTAQKNESARQ) has biased composition (polar residues). Disordered regions lie at residues 1771–1797 (NELATERSTAQKNESARQQLERQNKEL) and 1867–1972 (QYKE…KASE). The segment covering 1867–1876 (QYKEQAEKGN) has biased composition (basic and acidic residues). A C-terminal region spans residues 1935–1972 (SFVPSRRAGGRRVIENTDGSEEEMDARDSDFNGTKASE). At Thr1951 the chain carries Phosphothreonine. Phosphoserine occurs at positions 1954 and 1971.

The protein belongs to the TRAFAC class myosin-kinesin ATPase superfamily. Myosin family. In terms of assembly, muscle myosin is a hexameric protein that consists of 2 heavy chain subunits (MHC), 2 alkali light chain subunits (MLC) and 2 regulatory light chain subunits (MLC-2).

It localises to the melanosome. It is found in the cytoplasm. Its subcellular location is the myofibril. In terms of biological role, muscle contraction. The chain is Myosin-11 (Myh11) from Mus musculus (Mouse).